The chain runs to 381 residues: Guanine nucleotide-binding protein G(s) subunit alpha (381 aa).

Cysteine 3 carries the S-palmitoyl cysteine lipid modification. In terms of domain architecture, G-alpha spans 36–381 (ALHRLLLLGA…RMHLQKYELL (346 aa)). Positions 39-52 (RLLLLGAGESGKST) are G1 motif. GTP contacts are provided by residues 44 to 51 (GAGESGKS), 183 to 189 (LRCRVLT), 208 to 212 (GVGGQ), 277 to 280 (NKQD), and alanine 353. Mg(2+) is bound by residues serine 51 and threonine 189. The G2 motif stretch occupies residues 181–189 (DILRCRVLT). The tract at residues 204 to 213 (FYMFGVGGQR) is G3 motif. The G4 motif stretch occupies residues 273–280 (ILFLNKQD). The interval 351 to 356 (TTAVDT) is G5 motif.

Belongs to the G-alpha family. G(s) subfamily. In terms of assembly, g proteins are composed of 3 units; alpha, beta and gamma. The alpha chain contains the guanine nucleotide binding site.

Functionally, guanine nucleotide-binding proteins (G proteins) are involved as modulators or transducers in various transmembrane signaling systems. The G(s) protein is involved in hormonal regulation of adenylate cyclase: it activates the cyclase in response to beta-adrenergic stimuli. In Geodia cydonium (Sponge), this protein is Guanine nucleotide-binding protein G(s) subunit alpha.